We begin with the raw amino-acid sequence, 808 residues long: Transducin beta-like protein 3 (808 aa).

At Ala-2 the chain carries N-acetylalanine. WD repeat units lie at residues Glu-64–Lys-105, Ile-107–His-146, Gly-149–Val-190, Ala-193–Thr-232, Leu-245–Thr-284, Gly-290–Gln-329, Gly-332–Leu-372, Gly-374–Cys-413, Gly-419–Asn-459, Cys-477–Val-516, Gly-519–Glu-560, His-562–Asp-602, and His-604–Glu-642. A Phosphoserine modification is found at Ser-257. A Glycyl lysine isopeptide (Lys-Gly) (interchain with G-Cter in SUMO2) cross-link involves residue Lys-407.

In terms of assembly, part of the small subunit (SSU) processome, composed of more than 70 proteins and the RNA chaperone small nucleolar RNA (snoRNA) U3.

It is found in the nucleus. It localises to the nucleolus. Functionally, part of the small subunit (SSU) processome, first precursor of the small eukaryotic ribosomal subunit. During the assembly of the SSU processome in the nucleolus, many ribosome biogenesis factors, an RNA chaperone and ribosomal proteins associate with the nascent pre-rRNA and work in concert to generate RNA folding, modifications, rearrangements and cleavage as well as targeted degradation of pre-ribosomal RNA by the RNA exosome. The sequence is that of Transducin beta-like protein 3 from Homo sapiens (Human).